We begin with the raw amino-acid sequence, 321 residues long: Aspartate carbamoyltransferase catalytic subunit (321 aa).

The carbamoyl phosphate site is built by Arg-65 and Thr-66. Lys-93 contributes to the L-aspartate binding site. The carbamoyl phosphate site is built by Arg-115, His-143, and Gln-146. 2 residues coordinate L-aspartate: Arg-176 and Arg-230. Residues Gly-271 and Pro-272 each contribute to the carbamoyl phosphate site.

This sequence belongs to the aspartate/ornithine carbamoyltransferase superfamily. ATCase family. Heterododecamer (2C3:3R2) of six catalytic PyrB chains organized as two trimers (C3), and six regulatory PyrI chains organized as three dimers (R2).

It catalyses the reaction carbamoyl phosphate + L-aspartate = N-carbamoyl-L-aspartate + phosphate + H(+). The protein operates within pyrimidine metabolism; UMP biosynthesis via de novo pathway; (S)-dihydroorotate from bicarbonate: step 2/3. Its function is as follows. Catalyzes the condensation of carbamoyl phosphate and aspartate to form carbamoyl aspartate and inorganic phosphate, the committed step in the de novo pyrimidine nucleotide biosynthesis pathway. The chain is Aspartate carbamoyltransferase catalytic subunit from Bartonella bacilliformis (strain ATCC 35685 / KC583 / Herrer 020/F12,63).